A 283-amino-acid polypeptide reads, in one-letter code: uncharacterized protein (283 aa).

The region spanning 4–131 is the FAD-binding FR-type domain; it reads RPLHAFEVVA…MGPGGAYAPD (128 aa).

This is an uncharacterized protein from Mycobacterium bovis (strain ATCC BAA-935 / AF2122/97).